Consider the following 168-residue polypeptide: ATP synthase subunit b, chloroplastic (168 aa).

A helical transmembrane segment spans residues leucine 20–leucine 37.

Belongs to the ATPase B chain family. In terms of assembly, F-type ATPases have 2 components, F(1) - the catalytic core - and F(0) - the membrane proton channel. F(1) has five subunits: alpha(3), beta(3), gamma(1), delta(1), epsilon(1). F(0) has four main subunits: a(1), b(1), b'(1) and c(10-14). The alpha and beta chains form an alternating ring which encloses part of the gamma chain. F(1) is attached to F(0) by a central stalk formed by the gamma and epsilon chains, while a peripheral stalk is formed by the delta, b and b' chains.

The protein localises to the plastid. It is found in the chloroplast thylakoid membrane. Its function is as follows. F(1)F(0) ATP synthase produces ATP from ADP in the presence of a proton or sodium gradient. F-type ATPases consist of two structural domains, F(1) containing the extramembraneous catalytic core and F(0) containing the membrane proton channel, linked together by a central stalk and a peripheral stalk. During catalysis, ATP synthesis in the catalytic domain of F(1) is coupled via a rotary mechanism of the central stalk subunits to proton translocation. Component of the F(0) channel, it forms part of the peripheral stalk, linking F(1) to F(0). In Ostreococcus tauri, this protein is ATP synthase subunit b, chloroplastic.